The sequence spans 440 residues: Cytochrome P450 monooygenase 1 (440 aa).

Cys381 is a binding site for heme.

It belongs to the cytochrome P450 family. The cofactor is heme.

It participates in plant hormone biosynthesis; gibberellin biosynthesis. In terms of biological role, GA14 synthase; part of the gene cluster that mediates the biosynthesis of gibberellins (GAs), diterpenoids that may provide a selective advantage during infection of the preferred host plant, rice. Gibberellins (GAs) are diterpenoids and are synthesized via the mevalonate pathway. Biosynthesis of the major metabolite GA3 (gibberellic acid) from geranylgeranyl diphosphate (GGPP) requires 13 steps. The GGPP produced by the geranylgeranyl diphosphate synthase GGS2 is converted to ent-kaurene via ent-copalyldiphosphate in a two-step cyclization reaction performed by the bifunctional ent-copalyl diphosphate synthase/ent-kaurene synthase enzyme (CPS/KS). Ent-Kaurene is metabolized to GAs by a series of oxidation reactions catalyzed by cytochrome P450 monooxygenases. Cytochrome P450 monooxygenase P450-4 is an ent-kaurene oxidase that catalyzes the three oxidation steps between ent-kaurene and ent-kaurenoic acid. The highly multifunctional cytochrome P450 monooxygenase P450-1 then catalyzes four steps involving oxidation at two carbon atoms, in the main pathway from ent-kaurenoic acid to GA14 via GA12-aldehyde as well as producing kaurenolides and fujenoic acids as by-products. The cytochrome P450 monooxygenase P450-2 then converts GA14 to GA4 by removal of C-20. GA4 is further converted to GA7 by the GA4 desaturase DES via 1,2-desaturation before cytochrome P450 monooxygenase P450-3, a 13-hydroxylase, hydroxylates GA7 to GA3, the final product of the GA-biosynthetic pathway. In Gibberella fujikuroi (strain CBS 195.34 / IMI 58289 / NRRL A-6831) (Bakanae and foot rot disease fungus), this protein is Cytochrome P450 monooygenase 1.